The primary structure comprises 734 residues: Phosphoribosylformylglycinamidine synthase subunit PurL (734 aa).

The active site involves histidine 46. The ATP site is built by tyrosine 49 and lysine 88. A Mg(2+)-binding site is contributed by glutamate 90. Residues serine 91–histidine 94 and arginine 113 contribute to the substrate site. Residue histidine 92 is the Proton acceptor of the active site. Aspartate 114 contacts Mg(2+). Glutamine 237 is a binding site for substrate. Aspartate 265 is a binding site for Mg(2+). Residue glutamate 309–glutamine 311 coordinates substrate. 2 residues coordinate ATP: aspartate 489 and glycine 526. Residue asparagine 527 coordinates Mg(2+). Serine 529 is a binding site for substrate.

Belongs to the FGAMS family. In terms of assembly, monomer. Part of the FGAM synthase complex composed of 1 PurL, 1 PurQ and 2 PurS subunits.

It is found in the cytoplasm. It catalyses the reaction N(2)-formyl-N(1)-(5-phospho-beta-D-ribosyl)glycinamide + L-glutamine + ATP + H2O = 2-formamido-N(1)-(5-O-phospho-beta-D-ribosyl)acetamidine + L-glutamate + ADP + phosphate + H(+). It participates in purine metabolism; IMP biosynthesis via de novo pathway; 5-amino-1-(5-phospho-D-ribosyl)imidazole from N(2)-formyl-N(1)-(5-phospho-D-ribosyl)glycinamide: step 1/2. In terms of biological role, part of the phosphoribosylformylglycinamidine synthase complex involved in the purines biosynthetic pathway. Catalyzes the ATP-dependent conversion of formylglycinamide ribonucleotide (FGAR) and glutamine to yield formylglycinamidine ribonucleotide (FGAM) and glutamate. The FGAM synthase complex is composed of three subunits. PurQ produces an ammonia molecule by converting glutamine to glutamate. PurL transfers the ammonia molecule to FGAR to form FGAM in an ATP-dependent manner. PurS interacts with PurQ and PurL and is thought to assist in the transfer of the ammonia molecule from PurQ to PurL. The protein is Phosphoribosylformylglycinamidine synthase subunit PurL of Gluconobacter oxydans (strain 621H) (Gluconobacter suboxydans).